A 210-amino-acid polypeptide reads, in one-letter code: MDFYYLPLSAPCRSVLMTAKALGIELNKKLLKLFEGGHLKPEFLKINPQHTIPTLVDNGFALWESRAIMVYLVEKYGKQDDPLYPSCPKKRALINQRLYFDMGTLYQGFANYFYPQFKEKKPADPELFKKFEVTLDFLNTFLSESKYAAGDSLTLADLALLASVSTFEAVNIDVSKYEHIARWYALVKETAPGADENWAGALEMKTLIPK.

A GST N-terminal domain is found at 1-80 (MDFYYLPLSA…YLVEKYGKQD (80 aa)). Glutathione contacts are provided by residues Ser9, 50-52 (HTI), and 64-66 (ESR). Residues 87–208 (CPKKRALINQ…AGALEMKTLI (122 aa)) enclose the GST C-terminal domain.

The protein belongs to the GST superfamily. Theta family. Homodimer.

The enzyme catalyses RX + glutathione = an S-substituted glutathione + a halide anion + H(+). Conjugation of reduced glutathione to a wide number of exogenous and endogenous hydrophobic electrophiles. This is Glutathione S-transferase 4 (Gst4) from Musca domestica (House fly).